The following is a 258-amino-acid chain: Short-chain dehydrogenase/reductase aba4 (258 aa).

Residues Ile-20, Asp-66, and Lys-130 each coordinate NADP(+). Catalysis depends on proton donor residues Ser-146 and Tyr-160. Positions 160, 164, 193, and 195 each coordinate NADP(+). The Lowers pKa of active site Tyr role is filled by Lys-164.

This sequence belongs to the short-chain dehydrogenases/reductases (SDR) family.

The protein operates within hormone biosynthesis. In terms of biological role, short-chain dehydrogenase/reductase; part of the gene cluster that mediates the biosynthesis of abscisic acid (ABA), a phytohormone that acts antagonistically toward salicylic acid (SA), jasmonic acid (JA) and ethylene (ETH) signaling, to impede plant defense responses. The first step of the pathway catalyzes the reaction from farnesyl diphosphate to alpha-ionylideneethane performed by the alpha-ionylideneethane synthase aba3 via a three-step reaction mechanism involving 2 neutral intermediates, beta-farnesene and allofarnesene. The cytochrome P450 monooxygenase aba1 might then be involved in the conversion of alpha-ionylideneethane to alpha-ionylideneacetic acid. Alpha-ionylideneacetic acid is further converted to abscisic acid in 2 steps involving the cytochrome P450 monooxygenase aba2 and the short-chain dehydrogenase/reductase aba4, via the intermediates 1'-deoxy-ABA or 1',4'-trans-diol-ABA, depending on the order of action of these 2 enzymes. Aba2 is responsible for the hydroxylation of carbon atom C-1' and aba4 might be involved in the oxidation of the C-4' carbon atom. The polypeptide is Short-chain dehydrogenase/reductase aba4 (Botryotinia fuckeliana (Noble rot fungus)).